A 1163-amino-acid polypeptide reads, in one-letter code: MSGRKAQGKTLGVNMVRQGVRSLSNKIKQKTKQIGNRPGPSRGVQGFIFFFLFNVLTGRKITAHLKKLWRMLDPRQGLAVLKKVKRVVASLMRGLSSRKRRSYEVLTVQFLILGMLLMTGGVTLVRKSRWLLLNVTSEDLGKTFSVGTGNCTTNILEAKNWCPDSMEYNCPNLSPREEPDDIDCWCYGVENVRVAYGKCDSAGRSRRSRRAIDLPTHENHGLKTRQEKWMTGRMGERQLQKIERWLVRNPFFAVTALAIAYLVGSNMTQRVVIALLVLAVGPAYSAHCIGITDRDFIEGVHGGTWVSATLEQDKCVTVMAPDKPSLDISLETVAIDGPAEARKVCYSAVLTHVKINDKCPSTGEAHLAEENEGDHACKRTYSDRGWGNGCGLFGKGSIVACAKFTCAKSMSLFEVDQTKIQYVIRAQLHVGAKQENWNADIKTLKFDALSGSQEAEFTGYGKATLECQVQTAVDFSNSYIAEMEKESWIVDRQWAQDLTLPWQSGSGGVWREMHHLVEFEPPHAATIKVLALGNQEGSLKTALTGAMRVTKDTNGSNLYKLHGGHVSCRVKLSALTLKGTSYKMCTDKMSFVKNPTDTGHGTAVMQVKVPKGAPCRIPVMVADDLTASVNKGILVTVNPIASTNEDEVLIEVNPPFGDSYIIVGTGDSRLTYQWHKEGSSIGKLFTQTMKGAERLAVMGDAAWDFSSAGGFFTSVGKGIHMVFGSAFQGLFGGLSWITKVIMGAVLIWVGINMRNMTMSMSMILVGVIMMFLSLGVGADQGCAINFGKRELKCGDGVFIFRDSDDWLNKYSYYPEDPVKLASIVKASFEEGKCGLNSVDSLEHEMWRSRADEINAILEENEVDISVVVQDPKNIYQRGTHPFSRIRDGLQYGWKTWGKNLVFSPGRKNGSFIIDGKSRKECPFSNRVWNSLQIEEFGTGVFTTRVYMDAVFEYTMDCDGSILGAAVNGKKSAHGSPTFWMGSHEVNGTWMIHTLETLDYKECEWPLTHTIGTSVEESDMFMPRSIGGPVSSHNHIPGYKVQTNGPWMQVPLEVKREACPGTSVVVDGGCDGRGKSTRSTTDSGKIIPEWCCRSCTMPPVSFHGSDGCWYPMEIRPRKTHDNHLVRSWVTAGEVHAVPFGLVSMMIAMEVFLKKRQGPKQILVG.

At 1–104 (MSGRKAQGKT…LSSRKRRSYE (104 aa)) the chain is on the cytoplasmic side. The tract at residues 38–72 (PGPSRGVQGFIFFFLFNVLTGRKITAHLKKLWRML) is hydrophobic; homodimerization of capsid protein C. Residues 102–121 (SYEVLTVQFLILGMLLMTGG) constitute a propeptide, ER anchor for the capsid protein C, removed in mature form by serine protease NS3. Residues 105–125 (VLTVQFLILGMLLMTGGVTLV) traverse the membrane as a helical segment. At 126-244 (RKSRWLLLNV…GERQLQKIER (119 aa)) the chain is on the extracellular side. N-linked (GlcNAc...) asparagine; by host glycans are attached at residues Asn134 and Asn150. Residues 245-265 (WLVRNPFFAVTALAIAYLVGS) form a helical membrane-spanning segment. At 266-270 (NMTQR) the chain is on the cytoplasmic side. Residues 271-285 (VVIALLVLAVGPAYS) traverse the membrane as a helical segment. Over 286–730 (AHCIGITDRD…MVFGSAFQGL (445 aa)) the chain is Extracellular. 6 disulfides stabilise this stretch: Cys288-Cys315, Cys345-Cys406, Cys359-Cys390, Cys377-Cys401, Cys467-Cys568, and Cys585-Cys615. Positions 383-396 (DRGWGNGCGLFGKG) are fusion peptide. The chain crosses the membrane as a helical span at residues 731 to 751 (FGGLSWITKVIMGAVLIWVGI). The Extracellular segment spans residues 752–757 (NMRNMT). Residues 758–778 (MSMSMILVGVIMMFLSLGVGA) traverse the membrane as a helical segment. At 779–1163 (DQGCAINFGK…RQGPKQILVG (385 aa)) the chain is on the extracellular side. 6 disulfide bridges follow: Cys782/Cys793, Cys833/Cys921, Cys957/Cys1002, Cys1058/Cys1107, Cys1069/Cys1091, and Cys1090/Cys1094. 2 N-linked (GlcNAc...) asparagine; by host glycosylation sites follow: Asn908 and Asn986.

As to quaternary structure, homodimer. Interacts (via N-terminus) with host EXOC1 (via C-terminus); this interaction results in EXOC1 degradation through the proteasome degradation pathway. Forms heterodimers with envelope protein E in the endoplasmic reticulum and Golgi. In terms of assembly, homodimer; in the endoplasmic reticulum and Golgi. As to quaternary structure, homodimer; Homohexamer when secreted. Interacts with envelope protein E. Post-translationally, specific enzymatic cleavages in vivo yield mature proteins. The nascent capsid protein C contains a C-terminal hydrophobic domain that act as a signal sequence for translocation of prM into the lumen of the ER. Mature capsid protein C is cleaved at a site upstream of this hydrophobic domain by NS3. prM is cleaved in post-Golgi vesicles by a host furin, releasing the mature small envelope protein M, and peptide pr. Non-structural protein 2A-alpha, a C-terminally truncated form of non-structural protein 2A, results from partial cleavage by NS3. Specific enzymatic cleavages in vivo yield mature proteins peptide 2K acts as a signal sequence and is removed from the N-terminus of NS4B by the host signal peptidase in the ER lumen. Signal cleavage at the 2K-4B site requires a prior NS3 protease-mediated cleavage at the 4A-2K site. Cleaved in post-Golgi vesicles by a host furin, releasing the mature small envelope protein M, and peptide pr. This cleavage is incomplete as up to 30% of viral particles still carry uncleaved prM. In terms of processing, N-glycosylated. Post-translationally, N-glycosylated. The excreted form is glycosylated and this is required for efficient secretion of the protein from infected cells.

The protein resides in the virion. It localises to the host nucleus. Its subcellular location is the host cytoplasm. It is found in the host perinuclear region. The protein localises to the secreted. The protein resides in the virion membrane. It localises to the host endoplasmic reticulum membrane. Its function is as follows. Plays a role in virus budding by binding to the cell membrane and gathering the viral RNA into a nucleocapsid that forms the core of a mature virus particle. During virus entry, may induce genome penetration into the host cytoplasm after hemifusion induced by the surface proteins. Can migrate to the cell nucleus where it modulates host functions. Inhibits RNA silencing by interfering with host Dicer. Functionally, prevents premature fusion activity of envelope proteins in trans-Golgi by binding to envelope protein E at pH6.0. After virion release in extracellular space, gets dissociated from E dimers. In terms of biological role, acts as a chaperone for envelope protein E during intracellular virion assembly by masking and inactivating envelope protein E fusion peptide. prM is the only viral peptide matured by host furin in the trans-Golgi network probably to avoid catastrophic activation of the viral fusion activity in acidic Golgi compartment prior to virion release. prM-E cleavage is inefficient, and many virions are only partially matured. These uncleaved prM would play a role in immune evasion. Its function is as follows. May play a role in virus budding. Exerts cytotoxic effects by activating a mitochondrial apoptotic pathway through M ectodomain. May display a viroporin activity. Binds to host cell surface receptor and mediates fusion between viral and cellular membranes. Envelope protein is synthesized in the endoplasmic reticulum in the form of heterodimer with protein prM. They play a role in virion budding in the ER, and the newly formed immature particle is covered with 60 spikes composed of heterodimer between precursor prM and envelope protein E. The virion is transported to the Golgi apparatus where the low pH causes dissociation of PrM-E heterodimers and formation of E homodimers. prM-E cleavage is inefficient, and many virions are only partially matured. These uncleaved prM would play a role in immune evasion. Functionally, involved in immune evasion, pathogenesis and viral replication. Once cleaved off the polyprotein, is targeted to three destinations: the viral replication cycle, the plasma membrane and the extracellular compartment. Essential for viral replication. Required for formation of the replication complex and recruitment of other non-structural proteins to the ER-derived membrane structures. Excreted as a hexameric lipoparticle that plays a role against host immune response. Antagonizing the complement function. Binds to the host macrophages and dendritic cells. Inhibits signal transduction originating from Toll-like receptor 3 (TLR3). In terms of biological role, component of the viral RNA replication complex that functions in virion assembly and antagonizes the host immune response. This Aedes aegypti (Yellowfever mosquito) protein is Genome polyprotein.